The following is a 309-amino-acid chain: Probable manganese-dependent inorganic pyrophosphatase (309 aa).

Mn(2+)-binding residues include histidine 9, aspartate 13, aspartate 15, aspartate 75, histidine 97, and aspartate 149.

It belongs to the PPase class C family. The cofactor is Mn(2+).

Its subcellular location is the cytoplasm. The enzyme catalyses diphosphate + H2O = 2 phosphate + H(+). The chain is Probable manganese-dependent inorganic pyrophosphatase from Bacillus cereus (strain B4264).